An 83-amino-acid chain; its full sequence is U5-theraphotoxin-Hs1b 2 (83 aa).

The signal sequence occupies residues 1–21 (MQTSMFLTLTGLVLLFVVCYA). The propeptide occupies 22–49 (SESEEKEFPKELLSSIFAADSDFKEEER). 3 disulfide bridges follow: Cys-51–Cys-63, Cys-56–Cys-68, and Cys-62–Cys-75.

This sequence belongs to the neurotoxin 10 (Hwtx-1) family. 51 (Hntx-8) subfamily. Hntx-8 sub-subfamily. As to expression, expressed by the venom gland.

Its subcellular location is the secreted. Its function is as follows. Agglutinates erythrocytes. This Cyriopagopus schmidti (Chinese bird spider) protein is U5-theraphotoxin-Hs1b 2.